A 78-amino-acid chain; its full sequence is RNA-binding protein Hfq (78 aa).

One can recognise a Sm domain in the interval 10-69 (DPFLNALRKEHVPVSIYLVNGIKLQGNIESFDQYVVLLRNTVTQMVYKHAISTVVPARPV).

The protein belongs to the Hfq family. As to quaternary structure, homohexamer.

RNA chaperone that binds small regulatory RNA (sRNAs) and mRNAs to facilitate mRNA translational regulation in response to envelope stress, environmental stress and changes in metabolite concentrations. Also binds with high specificity to tRNAs. The chain is RNA-binding protein Hfq from Paraburkholderia phymatum (strain DSM 17167 / CIP 108236 / LMG 21445 / STM815) (Burkholderia phymatum).